The sequence spans 122 residues: Large ribosomal subunit protein uL18 (122 aa).

Positions 1–20 (MLKKVSKNTNRQGRHQRVRN) are enriched in basic residues. Positions 1 to 22 (MLKKVSKNTNRQGRHQRVRNKI) are disordered.

It belongs to the universal ribosomal protein uL18 family. As to quaternary structure, part of the 50S ribosomal subunit; part of the 5S rRNA/L5/L18/L25 subcomplex. Contacts the 5S and 23S rRNAs.

Its function is as follows. This is one of the proteins that bind and probably mediate the attachment of the 5S RNA into the large ribosomal subunit, where it forms part of the central protuberance. This is Large ribosomal subunit protein uL18 from Alkaliphilus metalliredigens (strain QYMF).